Consider the following 420-residue polypeptide: Glycogen synthase kinase-3 beta (420 aa).

The span at 1–22 shows a compositional bias: polar residues; it reads MSGRPRTTSFAESCKPVQQPSA. Residues 1–53 form a disordered region; it reads MSGRPRTTSFAESCKPVQQPSAFGSMKVSRDKDGSKVTTVVATPGQGPDRPQE. S9 carries the post-translational modification Phosphoserine; by PKB/AKT1, RPS6KA3 and SGK3. Residue C14 is the site of S-palmitoyl cysteine attachment. Positions 56-340 constitute a Protein kinase domain; that stretch reads YTDTKVIGNG…PLEACAHSFF (285 aa). Residues 62–70 and K85 each bind ATP; that span reads IGNGSFGVV. D181 (proton acceptor) is an active-site residue. A Phosphotyrosine modification is found at Y216. Positions 386–401 are enriched in low complexity; that stretch reads AAASTPTNATAASDAN. Residues 386 to 420 form a disordered region; it reads AAASTPTNATAASDANTGDRGQTNNAASASASNST. S389 is modified (phosphoserine). Phosphothreonine occurs at positions 390 and 402. A compositionally biased stretch (low complexity) spans 409–420; sequence NNAASASASNST.

The protein belongs to the protein kinase superfamily. CMGC Ser/Thr protein kinase family. GSK-3 subfamily. As to quaternary structure, monomer. Interacts with ARRB2, DISC1 and ZBED3. Interacts with CABYR, MMP2, MUC1, NIN and PRUNE1. Interacts with AXIN1; the interaction mediates hyperphosphorylation of CTNNB1 leading to its ubiquitination and destruction. Interacts with and phosphorylates SNAI1. Interacts with DNM1L (via a C-terminal domain). Found in a complex composed of MACF1, APC, AXIN1, CTNNB1 and GSK3B. Interacts with SGK3. Interacts with DAB2IP (via C2 domain); the interaction stimulates GSK3B kinase activation. Interacts (via C2 domain) with PPP2CA. Interacts with the CLOCK-BMAL1 heterodimer. Interacts with the BMAL1. Interacts with CTNND2. Interacts with NCYM. The complex composed, at least, of APC, CTNNB1 and GSK3B interacts with JPT1; the interaction requires the inactive form of GSK3B (phosphorylated at 'Ser-9'). Forms a complex composed of PRKAR2A or PRKAR2B, GSK3B and GSKIP through GSKIP interaction; facilitates PKA-induced phosphorylation and regulates GSK3B activity. Interacts with GSKIP. Interacts with GID8. Interacts with PIWIL2. Interacts with LMBR1L. Interacts with DDX3X. Interacts with BIRC2. Interacts with TNFRSF10B; TNFRSF10B stimulation inhibits GSK3B kinase activity. Interacts with RICTOR; the interaction results in phosphorylation of RICTOR at 'Thr-1695' by GSK3B which facilitates FBXW7-mediated ubiquitination and subsequent degradation of RICTOR. Found in a complex with SLC39A6, SLC39A10 and with GSK3B that controls NCAM1 phosphorylation. Interacts with PKP3 (via ARM repeats); the interaction may be involved in PKP3 protein degradation. Post-translationally, phosphorylated by AKT1 and ILK1. Upon insulin-mediated signaling, the activated PKB/AKT1 protein kinase phosphorylates and deactivates GSK3B, resulting in the dephosphorylation and activation of GYS1. Activated by phosphorylation at Tyr-216. Inactivated by phosphorylation at Ser-9. Phosphorylated in a circadian manner in the hippocampus. In terms of processing, mono-ADP-ribosylation by PARP10 negatively regulates kinase activity. Palmitoylated. Palmitoylation by ZDHHC4 prevents AKT1-mediated phosphorylation. Expressed in testis, thymus, prostate and ovary and weakly expressed in lung, brain and kidney. Colocalizes with EIF2AK2/PKR and TAU in the Alzheimer disease (AD) brain.

The protein resides in the cytoplasm. Its subcellular location is the nucleus. It is found in the cell membrane. The enzyme catalyses L-seryl-[tau protein] + ATP = O-phospho-L-seryl-[tau protein] + ADP + H(+). It carries out the reaction L-threonyl-[tau protein] + ATP = O-phospho-L-threonyl-[tau protein] + ADP + H(+). The catalysed reaction is L-seryl-[protein] + ATP = O-phospho-L-seryl-[protein] + ADP + H(+). It catalyses the reaction L-threonyl-[protein] + ATP = O-phospho-L-threonyl-[protein] + ADP + H(+). Its activity is regulated as follows. Activated by phosphorylation at Tyr-216. In response to insulin, inhibited by phosphorylation at Ser-9 by PKB/AKT1 and RPS6KA3; phosphorylation at this site causes a conformational change, preventing access of substrates to the active site. Inhibited by IL22 treatment which also triggers phosphorylation at Ser-9, promoting inactivation. Inhibited by lithium. Its function is as follows. Constitutively active protein kinase that acts as a negative regulator in the hormonal control of glucose homeostasis, Wnt signaling and regulation of transcription factors and microtubules, by phosphorylating and inactivating glycogen synthase (GYS1 or GYS2), EIF2B, CTNNB1/beta-catenin, APC, AXIN1, DPYSL2/CRMP2, JUN, NFATC1/NFATC, MAPT/TAU and MACF1. Requires primed phosphorylation of the majority of its substrates. In skeletal muscle, contributes to insulin regulation of glycogen synthesis by phosphorylating and inhibiting GYS1 activity and hence glycogen synthesis. May also mediate the development of insulin resistance by regulating activation of transcription factors. Regulates protein synthesis by controlling the activity of initiation factor 2B (EIF2BE/EIF2B5) in the same manner as glycogen synthase. In Wnt signaling, GSK3B forms a multimeric complex with APC, AXIN1 and CTNNB1/beta-catenin and phosphorylates the N-terminus of CTNNB1 leading to its degradation mediated by ubiquitin/proteasomes. Phosphorylates JUN at sites proximal to its DNA-binding domain, thereby reducing its affinity for DNA. Phosphorylates NFATC1/NFATC on conserved serine residues promoting NFATC1/NFATC nuclear export, shutting off NFATC1/NFATC gene regulation, and thereby opposing the action of calcineurin. Phosphorylates MAPT/TAU on 'Thr-548', decreasing significantly MAPT/TAU ability to bind and stabilize microtubules. MAPT/TAU is the principal component of neurofibrillary tangles in Alzheimer disease. Plays an important role in ERBB2-dependent stabilization of microtubules at the cell cortex. Phosphorylates MACF1, inhibiting its binding to microtubules which is critical for its role in bulge stem cell migration and skin wound repair. Probably regulates NF-kappa-B (NFKB1) at the transcriptional level and is required for the NF-kappa-B-mediated anti-apoptotic response to TNF-alpha (TNF/TNFA). Negatively regulates replication in pancreatic beta-cells, resulting in apoptosis, loss of beta-cells and diabetes. Through phosphorylation of the anti-apoptotic protein MCL1, may control cell apoptosis in response to growth factors deprivation. Phosphorylates MUC1 in breast cancer cells, decreasing the interaction of MUC1 with CTNNB1/beta-catenin. Is necessary for the establishment of neuronal polarity and axon outgrowth. Phosphorylates MARK2, leading to inhibition of its activity. Phosphorylates SIK1 at 'Thr-182', leading to sustainment of its activity. Phosphorylates ZC3HAV1 which enhances its antiviral activity. Phosphorylates SNAI1, leading to its ubiquitination and proteasomal degradation. Phosphorylates SFPQ at 'Thr-687' upon T-cell activation. Phosphorylates NR1D1 st 'Ser-55' and 'Ser-59' and stabilizes it by protecting it from proteasomal degradation. Regulates the circadian clock via phosphorylation of the major clock components including BMAL1, CLOCK and PER2. Phosphorylates FBXL2 at 'Thr-404' and primes it for ubiquitination by the SCF(FBXO3) complex and proteasomal degradation. Phosphorylates CLOCK AT 'Ser-427' and targets it for proteasomal degradation. Phosphorylates BMAL1 at 'Ser-17' and 'Ser-21' and primes it for ubiquitination and proteasomal degradation. Phosphorylates OGT at 'Ser-3' or 'Ser-4' which positively regulates its activity. Phosphorylates MYCN in neuroblastoma cells which may promote its degradation. Regulates the circadian rhythmicity of hippocampal long-term potentiation and BMAL1 and PER2 expression. Acts as a regulator of autophagy by mediating phosphorylation of KAT5/TIP60 under starvation conditions, activating KAT5/TIP60 acetyltransferase activity and promoting acetylation of key autophagy regulators, such as ULK1 and RUBCNL/Pacer. Negatively regulates extrinsic apoptotic signaling pathway via death domain receptors. Promotes the formation of an anti-apoptotic complex, made of DDX3X, BRIC2 and GSK3B, at death receptors, including TNFRSF10B. The anti-apoptotic function is most effective with weak apoptotic signals and can be overcome by stronger stimulation. Phosphorylates E2F1, promoting the interaction between E2F1 and USP11, stabilizing E2F1 and promoting its activity. Phosphorylates mTORC2 complex component RICTOR at 'Ser-1235' in response to endoplasmic stress, inhibiting mTORC2. Phosphorylates mTORC2 complex component RICTOR at 'Thr-1695' which facilitates FBXW7-mediated ubiquitination and subsequent degradation of RICTOR. Phosphorylates FXR1, promoting FXR1 ubiquitination by the SCF(FBXO4) complex and FXR1 degradation by the proteasome. Phosphorylates interleukin-22 receptor subunit IL22RA1, preventing its proteasomal degradation. The sequence is that of Glycogen synthase kinase-3 beta from Homo sapiens (Human).